The chain runs to 172 residues: Glutamyl-tRNA(Gln) amidotransferase subunit C-4, mitochondrial (172 aa).

Residues 1–23 (MIRIPFHLRQTPGRTLHSLVRSF) constitute a mitochondrion transit peptide. The tract at residues 51-73 (PSKVPQRPHKSTIDGQSTPTRIP) is disordered.

The protein belongs to the GatC family. As to quaternary structure, subunit of the heterotrimeric GatCAB amidotransferase (AdT) complex, composed of A, B and C subunits.

Its subcellular location is the mitochondrion. The enzyme catalyses L-glutamyl-tRNA(Gln) + L-glutamine + ATP + H2O = L-glutaminyl-tRNA(Gln) + L-glutamate + ADP + phosphate + H(+). Allows the formation of correctly charged Gln-tRNA(Gln) through the transamidation of misacylated Glu-tRNA(Gln) in the mitochondria. The reaction takes place in the presence of glutamine and ATP through an activated gamma-phospho-Glu-tRNA(Gln). The protein is Glutamyl-tRNA(Gln) amidotransferase subunit C-4, mitochondrial of Culex quinquefasciatus (Southern house mosquito).